The sequence spans 251 residues: Imidazole glycerol phosphate synthase subunit HisF (251 aa).

Active-site residues include aspartate 11 and aspartate 130.

It belongs to the HisA/HisF family. As to quaternary structure, heterodimer of HisH and HisF.

The protein localises to the cytoplasm. The catalysed reaction is 5-[(5-phospho-1-deoxy-D-ribulos-1-ylimino)methylamino]-1-(5-phospho-beta-D-ribosyl)imidazole-4-carboxamide + L-glutamine = D-erythro-1-(imidazol-4-yl)glycerol 3-phosphate + 5-amino-1-(5-phospho-beta-D-ribosyl)imidazole-4-carboxamide + L-glutamate + H(+). It participates in amino-acid biosynthesis; L-histidine biosynthesis; L-histidine from 5-phospho-alpha-D-ribose 1-diphosphate: step 5/9. IGPS catalyzes the conversion of PRFAR and glutamine to IGP, AICAR and glutamate. The HisF subunit catalyzes the cyclization activity that produces IGP and AICAR from PRFAR using the ammonia provided by the HisH subunit. In Thiobacillus denitrificans (strain ATCC 25259 / T1), this protein is Imidazole glycerol phosphate synthase subunit HisF.